A 289-amino-acid chain; its full sequence is Nucleotide-binding protein COPRO5265_0725 (289 aa).

9-16 (GLSGAGKS) serves as a coordination point for ATP. 59 to 62 (DSRS) contributes to the GTP binding site.

The protein belongs to the RapZ-like family.

Displays ATPase and GTPase activities. In Coprothermobacter proteolyticus (strain ATCC 35245 / DSM 5265 / OCM 4 / BT), this protein is Nucleotide-binding protein COPRO5265_0725.